A 347-amino-acid chain; its full sequence is Dihydroorotase (347 aa).

His14 and His16 together coordinate Zn(2+). Substrate-binding positions include 16-18 and Asn42; that span reads HLR. Zn(2+)-binding residues include Lys100, His137, and His175. The residue at position 100 (Lys100) is an N6-carboxylysine. His137 serves as a coordination point for substrate. Leu220 is a binding site for substrate. Asp248 provides a ligand contact to Zn(2+). Asp248 is an active-site residue. His252 and Ala264 together coordinate substrate.

It belongs to the metallo-dependent hydrolases superfamily. DHOase family. Class II DHOase subfamily. As to quaternary structure, homodimer. Zn(2+) is required as a cofactor.

The enzyme catalyses (S)-dihydroorotate + H2O = N-carbamoyl-L-aspartate + H(+). It participates in pyrimidine metabolism; UMP biosynthesis via de novo pathway; (S)-dihydroorotate from bicarbonate: step 3/3. In terms of biological role, catalyzes the reversible cyclization of carbamoyl aspartate to dihydroorotate. The chain is Dihydroorotase from Jannaschia sp. (strain CCS1).